Consider the following 820-residue polypeptide: Phenylalanine--tRNA ligase beta subunit (820 aa).

In terms of domain architecture, tRNA-binding spans Pro-39–Arg-150. Residues Glu-435–Glu-510 enclose the B5 domain. Residues Asp-488, Asp-494, Glu-497, and Glu-498 each contribute to the Mg(2+) site. In terms of domain architecture, FDX-ACB spans Ser-727–Arg-818.

It belongs to the phenylalanyl-tRNA synthetase beta subunit family. Type 1 subfamily. Tetramer of two alpha and two beta subunits. Mg(2+) is required as a cofactor.

It localises to the cytoplasm. It catalyses the reaction tRNA(Phe) + L-phenylalanine + ATP = L-phenylalanyl-tRNA(Phe) + AMP + diphosphate + H(+). This Deinococcus radiodurans (strain ATCC 13939 / DSM 20539 / JCM 16871 / CCUG 27074 / LMG 4051 / NBRC 15346 / NCIMB 9279 / VKM B-1422 / R1) protein is Phenylalanine--tRNA ligase beta subunit (pheT).